The following is a 103-amino-acid chain: Large ribosomal subunit protein bL21 (103 aa).

It belongs to the bacterial ribosomal protein bL21 family. Part of the 50S ribosomal subunit. Contacts protein L20.

This protein binds to 23S rRNA in the presence of protein L20. This is Large ribosomal subunit protein bL21 from Alteromonas mediterranea (strain DSM 17117 / CIP 110805 / LMG 28347 / Deep ecotype).